The chain runs to 35 residues: Natriuretic peptide TNPb (35 aa).

The cysteines at positions 9 and 25 are disulfide-linked.

In terms of tissue distribution, expressed by the venom gland.

The protein localises to the secreted. Its function is as follows. Snake venom natriuretic peptide that exhibits vasoactive and probable hypotensive activity. Is only weakly active on natriuretic peptide receptor-C (NPR3). Stimulates cGMP production through the natriuretic peptide receptor 1 (NPR1) with moderate potencies for the rat NPR1 (EC(50)=1200 nM), and very weak potencies over human NPR1 (30% activation at 10 uM). In vivo, does not impact systolic and diastolic blood pressure, as well as heart rate, when intravenously injected in conscious rabbits. Does not affect the bradycardia due to cardiac afferent stimulation (Bezold-Jarisch reflex). In Oxyuranus microlepidotus (Inland taipan), this protein is Natriuretic peptide TNPb.